The sequence spans 344 residues: UDP-N-acetylglucosamine transporter UGNT1 (344 aa).

The disordered stretch occupies residues 1–23 (MRNNPVLPVSDPPLAGENDSDGK). 9 helical membrane-spanning segments follow: residues 41 to 61 (YAALSYMACAVMLVLFNKAAL), 66 to 86 (FPCVNVITLFQMVSSSLFLYA), 92 to 112 (IISFTAADSFSIDSASTFVPV), 114 to 134 (TLFHTLPLAIAYLLYMLASMA), 167 to 187 (YTRSIIGSVGIILLGAFFAGA), 194 to 214 (FYGYGVVFLANISTAVYLATI), 226 to 246 (FGLMWSNGIICGPILMIWTFI), 264 to 284 (FMVVLLCSCVLAFVLNYCIFL), and 304 to 324 (FTVGLGWMLFGGLPFDLMNVI).

The protein belongs to the TPT transporter family. UGnT (TC 2.A.7.15) subfamily. Expressed in roots, leaves, stems, flowers and siliques.

The protein resides in the golgi apparatus membrane. Functionally, mediates the transport of UDP-N-acetylglucosamine (UDP-GlcNAc) across the Golgi apparatus membrane. Delivers an essential substrate for the maturation of N-glycans and the GlcNAc-containing glycosyl inositol phosphorylceramide (GIPC) class of sphingolipids in the Golgi apparatus. This is UDP-N-acetylglucosamine transporter UGNT1 from Arabidopsis thaliana (Mouse-ear cress).